The sequence spans 146 residues: Deoxyuridine 5'-triphosphate nucleotidohydrolase (146 aa).

Substrate-binding positions include 60-62 (RSG), Asn73, and 77-79 (VID).

This sequence belongs to the dUTPase family. Mg(2+) is required as a cofactor.

The enzyme catalyses dUTP + H2O = dUMP + diphosphate + H(+). Its pathway is pyrimidine metabolism; dUMP biosynthesis; dUMP from dCTP (dUTP route): step 2/2. Functionally, this enzyme is involved in nucleotide metabolism: it produces dUMP, the immediate precursor of thymidine nucleotides and it decreases the intracellular concentration of dUTP so that uracil cannot be incorporated into DNA. The polypeptide is Deoxyuridine 5'-triphosphate nucleotidohydrolase (Tropheryma whipplei (strain TW08/27) (Whipple's bacillus)).